The following is a 371-amino-acid chain: Riboflavin biosynthesis protein RibD (371 aa).

One can recognise a CMP/dCMP-type deaminase domain in the interval 1–122 (MEEYYMNTAI…MLEEAGIEVK (122 aa)). The interval 1 to 144 (MEEYYMNTAI…KMFLHFMRTG (144 aa)) is deaminase. Histidine 49 is a Zn(2+) binding site. Glutamate 51 acts as the Proton donor in catalysis. Zn(2+) is bound by residues cysteine 74 and cysteine 83. Residues 145-371 (LPYVTLKAAA…KDGDDVYRNR (227 aa)) are reductase. Position 153 (alanine 153) interacts with NADP(+). Residue serine 167 participates in substrate binding. Tryptophan 169 contacts NADP(+). Residue arginine 183 participates in substrate binding. Positions 195 and 199 each coordinate NADP(+). Residues leucine 203 and arginine 206 each coordinate substrate. Threonine 221 is an NADP(+) binding site. Glutamate 290 is a substrate binding site. 292 to 298 (GASVHGS) lines the NADP(+) pocket.

It in the N-terminal section; belongs to the cytidine and deoxycytidylate deaminase family. This sequence in the C-terminal section; belongs to the HTP reductase family. Requires Zn(2+) as cofactor.

The enzyme catalyses 2,5-diamino-6-hydroxy-4-(5-phosphoribosylamino)-pyrimidine + H2O + H(+) = 5-amino-6-(5-phospho-D-ribosylamino)uracil + NH4(+). The catalysed reaction is 5-amino-6-(5-phospho-D-ribitylamino)uracil + NADP(+) = 5-amino-6-(5-phospho-D-ribosylamino)uracil + NADPH + H(+). It participates in cofactor biosynthesis; riboflavin biosynthesis; 5-amino-6-(D-ribitylamino)uracil from GTP: step 2/4. Its pathway is cofactor biosynthesis; riboflavin biosynthesis; 5-amino-6-(D-ribitylamino)uracil from GTP: step 3/4. Its function is as follows. Converts 2,5-diamino-6-(ribosylamino)-4(3h)-pyrimidinone 5'-phosphate into 5-amino-6-(ribosylamino)-2,4(1h,3h)-pyrimidinedione 5'-phosphate. This Bacillus amyloliquefaciens (Bacillus velezensis) protein is Riboflavin biosynthesis protein RibD (ribD).